Here is a 312-residue protein sequence, read N- to C-terminus: Olfactory receptor 1493 (312 aa).

Residues 1–23 are Extracellular-facing; it reads MNNKTVITHFLLLGLPIPPEHQQ. Residue N3 is glycosylated (N-linked (GlcNAc...) asparagine). Residues 24–48 traverse the membrane as a helical segment; that stretch reads LFFALFLIMYLTTFLGNLLIVVLVQ. Residues 49 to 55 lie on the Cytoplasmic side of the membrane; sequence LDSHLHT. A helical transmembrane segment spans residues 56–77; sequence PMYLFLSNLSFSDLCFSSVTML. Residues 78-98 lie on the Extracellular side of the membrane; the sequence is KLLQNIQSQVPSISYAGCLTQ. A disulfide bridge connects residues C95 and C187. Residues 99-118 traverse the membrane as a helical segment; sequence IFFFLLFGYLGNFLLVAMAY. Over 119–137 the chain is Cytoplasmic; sequence DRYVAICFPLHYTNIMSHK. The chain crosses the membrane as a helical span at residues 138–156; the sequence is LCTCLLLVFWIMTSSHAMM. Over 157-194 the chain is Extracellular; the sequence is HTLLAARLSFCENNVLLNFFCDLFVLLKLACSDTYVNE. The chain crosses the membrane as a helical span at residues 195 to 217; that stretch reads LMIHIMGVIIIVIPFVLIVISYA. At 218–234 the chain is on the cytoplasmic side; it reads KIISSILKVPSTQSIHK. The chain crosses the membrane as a helical span at residues 235-258; it reads VFSTCGSHLSVVSLFYGTIIGLYL. The Extracellular portion of the chain corresponds to 259–270; that stretch reads CPSGDNFSLKGS. Residues 271-290 form a helical membrane-spanning segment; sequence AMAMMYTVVTPMLNPFIYSL. Topologically, residues 291–312 are cytoplasmic; sequence RNRDMKQALIRVTCSKKISLPW.

The protein belongs to the G-protein coupled receptor 1 family. In terms of tissue distribution, olfactory epithelium.

The protein resides in the cell membrane. Its function is as follows. Odorant receptor. The protein is Olfactory receptor 1493 (Olr1493) of Rattus norvegicus (Rat).